The chain runs to 364 residues: ATP synthase gamma chain, chloroplastic (364 aa).

The transit peptide at 1–41 (MACSLSFSSSVSTFHLPTTTQSTQAPPNNATTLPTTNPIQC) directs the protein to the chloroplast. A disordered region spans residues 17 to 36 (PTTTQSTQAPPNNATTLPTT). Positions 25–36 (APPNNATTLPTT) are enriched in low complexity. C130 is a catalytic residue. C240 and C246 are disulfide-bonded.

The protein belongs to the ATPase gamma chain family. As to quaternary structure, F-type ATPases have 2 components, CF(1) - the catalytic core - and CF(0) - the membrane proton channel. CF(1) has five subunits: alpha(3), beta(3), gamma(1), delta(1), epsilon(1). CF(0) has four main subunits: a, b, b' and c. Post-translationally, disulfide bond; Cys-240 and Cys-246 are known to form a disulfide bridge in the dark which gives rise to an inactive enzyme. Activation can be brought about by a ferredoxin-dependent reduction of the disulfide bond in the light.

The protein resides in the plastid. It is found in the chloroplast thylakoid membrane. Its function is as follows. Produces ATP from ADP in the presence of a proton gradient across the membrane. The gamma chain is believed to be important in regulating ATPase activity and the flow of protons through the CF(0) complex. The polypeptide is ATP synthase gamma chain, chloroplastic (ATPC) (Spinacia oleracea (Spinach)).